The primary structure comprises 64 residues: Prokaryotic ubiquitin-like protein Pup (64 aa).

Positions 1 to 11 (MAQEQTKRTGG) are enriched in basic and acidic residues. Positions 1-38 (MAQEQTKRTGGGDEDDTPGGDGAAGQERREKLAEDTDD) are disordered. An ARC ATPase binding region spans residues 21 to 58 (DGAAGQERREKLAEDTDDLLDEIDDVLEENAEDFVRAY). Residues 24–52 (AGQERREKLAEDTDDLLDEIDDVLEENAE) adopt a coiled-coil conformation. Position 64 is a deamidated glutamine (glutamine 64). Glutamine 64 participates in a covalent cross-link: Isoglutamyl lysine isopeptide (Gln-Lys) (interchain with K-? in acceptor proteins).

It belongs to the prokaryotic ubiquitin-like protein family. Strongly interacts with the proteasome-associated ATPase ARC through a hydrophobic interface; the interacting region of Pup lies in its C-terminal half. There is one Pup binding site per ARC hexamer ring. Is modified by deamidation of its C-terminal glutamine to glutamate by the deamidase Dop, a prerequisite to the subsequent pupylation process.

Its pathway is protein degradation; proteasomal Pup-dependent pathway. Protein modifier that is covalently attached to lysine residues of substrate proteins, thereby targeting them for proteasomal degradation. The tagging system is termed pupylation. The sequence is that of Prokaryotic ubiquitin-like protein Pup from Rhodococcus opacus (strain B4).